The sequence spans 340 residues: 4-hydroxy-3-methylbut-2-enyl diphosphate reductase (340 aa).

Residue C19 coordinates [4Fe-4S] cluster. Positions 50 and 90 each coordinate (2E)-4-hydroxy-3-methylbut-2-enyl diphosphate. 2 residues coordinate dimethylallyl diphosphate: H50 and H90. Positions 50 and 90 each coordinate isopentenyl diphosphate. C112 is a [4Fe-4S] cluster binding site. (2E)-4-hydroxy-3-methylbut-2-enyl diphosphate is bound at residue H141. H141 provides a ligand contact to dimethylallyl diphosphate. H141 lines the isopentenyl diphosphate pocket. E143 functions as the Proton donor in the catalytic mechanism. A (2E)-4-hydroxy-3-methylbut-2-enyl diphosphate-binding site is contributed by T190. C220 is a binding site for [4Fe-4S] cluster. The (2E)-4-hydroxy-3-methylbut-2-enyl diphosphate site is built by S248, S249, N250, and S292. 4 residues coordinate dimethylallyl diphosphate: S248, S249, N250, and S292. Isopentenyl diphosphate-binding residues include S248, S249, N250, and S292.

The protein belongs to the IspH family. [4Fe-4S] cluster serves as cofactor.

The catalysed reaction is isopentenyl diphosphate + 2 oxidized [2Fe-2S]-[ferredoxin] + H2O = (2E)-4-hydroxy-3-methylbut-2-enyl diphosphate + 2 reduced [2Fe-2S]-[ferredoxin] + 2 H(+). It carries out the reaction dimethylallyl diphosphate + 2 oxidized [2Fe-2S]-[ferredoxin] + H2O = (2E)-4-hydroxy-3-methylbut-2-enyl diphosphate + 2 reduced [2Fe-2S]-[ferredoxin] + 2 H(+). Its pathway is isoprenoid biosynthesis; dimethylallyl diphosphate biosynthesis; dimethylallyl diphosphate from (2E)-4-hydroxy-3-methylbutenyl diphosphate: step 1/1. It participates in isoprenoid biosynthesis; isopentenyl diphosphate biosynthesis via DXP pathway; isopentenyl diphosphate from 1-deoxy-D-xylulose 5-phosphate: step 6/6. Catalyzes the conversion of 1-hydroxy-2-methyl-2-(E)-butenyl 4-diphosphate (HMBPP) into a mixture of isopentenyl diphosphate (IPP) and dimethylallyl diphosphate (DMAPP). Acts in the terminal step of the DOXP/MEP pathway for isoprenoid precursor biosynthesis. This Thermus thermophilus (strain ATCC BAA-163 / DSM 7039 / HB27) protein is 4-hydroxy-3-methylbut-2-enyl diphosphate reductase.